Consider the following 427-residue polypeptide: Enolase (427 aa).

A (2R)-2-phosphoglycerate-binding site is contributed by Q163. The Proton donor role is filled by E205. Residues D242, E285, and D312 each contribute to the Mg(2+) site. (2R)-2-phosphoglycerate-binding residues include K337, R366, S367, and K388. The Proton acceptor role is filled by K337.

The protein belongs to the enolase family. Requires Mg(2+) as cofactor.

It is found in the cytoplasm. The protein resides in the secreted. It localises to the cell surface. The enzyme catalyses (2R)-2-phosphoglycerate = phosphoenolpyruvate + H2O. It functions in the pathway carbohydrate degradation; glycolysis; pyruvate from D-glyceraldehyde 3-phosphate: step 4/5. Catalyzes the reversible conversion of 2-phosphoglycerate (2-PG) into phosphoenolpyruvate (PEP). It is essential for the degradation of carbohydrates via glycolysis. The sequence is that of Enolase from Burkholderia vietnamiensis (strain G4 / LMG 22486) (Burkholderia cepacia (strain R1808)).